The primary structure comprises 126 residues: Small ribosomal subunit protein bS6 (126 aa).

Belongs to the bacterial ribosomal protein bS6 family.

Its function is as follows. Binds together with bS18 to 16S ribosomal RNA. The protein is Small ribosomal subunit protein bS6 of Bordetella bronchiseptica (strain ATCC BAA-588 / NCTC 13252 / RB50) (Alcaligenes bronchisepticus).